The sequence spans 361 residues: Peptide chain release factor 1 (361 aa).

At Gln235 the chain carries N5-methylglutamine.

This sequence belongs to the prokaryotic/mitochondrial release factor family. Methylated by PrmC. Methylation increases the termination efficiency of RF1.

Its subcellular location is the cytoplasm. Peptide chain release factor 1 directs the termination of translation in response to the peptide chain termination codons UAG and UAA. In Xanthomonas campestris pv. campestris (strain B100), this protein is Peptide chain release factor 1.